We begin with the raw amino-acid sequence, 1280 residues long: Rho guanine nucleotide exchange factor 10-like protein (1280 aa).

Pro residues predominate over residues 1-10; the sequence is MASSNPPPQP. Residues 1–94 are disordered; that stretch reads MASSNPPPQP…TEAPTVVSNG (94 aa). Positions 26 to 46 are enriched in acidic residues; it reads EVEEDSGEAFEFDDSDEEEDT. A Phosphoserine modification is found at Ser-40. Residues 78–89 are compositionally biased toward low complexity; sequence PAAAPPQTEAPT. Tyr-131 and Tyr-152 each carry phosphotyrosine. Residues 161-202 are disordered; the sequence is PRETEDLGWSSSEFESYSEDSGEETKPEAEPTKHRGSFQPKL. A compositionally biased stretch (basic and acidic residues) spans 183-193; sequence EETKPEAEPTK. Position 279 is a phosphoserine (Ser-279). The 188-residue stretch at 314–501 folds into the DH domain; the sequence is VRRHILGSIV…ETLAEKLNEQ (188 aa). 2 disordered regions span residues 1133–1163 and 1186–1207; these read QEEAEGPQAEEDKPDGQAHETVPGPDSHTAR and PLLSVREPAPADGSALEHSEED.

As to quaternary structure, interacts with RHOA, RHOB and RHOC.

It localises to the cytoplasm. Acts as a guanine nucleotide exchange factor (GEF) for RHOA, RHOB and RHOC. The polypeptide is Rho guanine nucleotide exchange factor 10-like protein (Arhgef10l) (Mus musculus (Mouse)).